A 66-amino-acid polypeptide reads, in one-letter code: Beta-toxin ChFII.7 (66 aa).

One can recognise an LCN-type CS-alpha/beta domain in the interval 1–66; sequence KEGYLVNHST…VWPLPKKTCN (66 aa). Intrachain disulfides connect C12–C65, C16–C41, C25–C46, and C29–C48. The residue at position 66 (N66) is an Asparagine amide.

As to expression, expressed by the venom gland.

The protein resides in the secreted. In terms of biological role, beta toxins bind voltage independently at site-4 of sodium channels (Nav) and shift the activation voltage toward more negative potentials, thereby affecting sodium channel activation CC and promoting spontaneous and repetitive firing. This chain is Beta-toxin ChFII.7, found in Centruroides hirsutipalpus (Scorpion).